The following is a 342-amino-acid chain: Anthranilate phosphoribosyltransferase (342 aa).

5-phospho-alpha-D-ribose 1-diphosphate-binding positions include Gly-79, 82 to 83, Thr-87, 89 to 92, 107 to 115, and Ser-119; these read GD, NIST, and KHCNQRISS. Gly-79 provides a ligand contact to anthranilate. Position 91 (Ser-91) interacts with Mg(2+). Position 110 (Asn-110) interacts with anthranilate. Arg-165 lines the anthranilate pocket. Residues Asp-223 and Glu-224 each coordinate Mg(2+).

Belongs to the anthranilate phosphoribosyltransferase family. Homodimer. Requires Mg(2+) as cofactor.

It catalyses the reaction N-(5-phospho-beta-D-ribosyl)anthranilate + diphosphate = 5-phospho-alpha-D-ribose 1-diphosphate + anthranilate. It participates in amino-acid biosynthesis; L-tryptophan biosynthesis; L-tryptophan from chorismate: step 2/5. In terms of biological role, catalyzes the transfer of the phosphoribosyl group of 5-phosphorylribose-1-pyrophosphate (PRPP) to anthranilate to yield N-(5'-phosphoribosyl)-anthranilate (PRA). In Buchnera aphidicola subsp. Acyrthosiphon pisum (strain 5A), this protein is Anthranilate phosphoribosyltransferase.